The primary structure comprises 101 residues: Ubiquitin-related modifier 1 homolog (101 aa).

Glycine 101 is subject to 1-thioglycine. Residue glycine 101 forms a Glycyl lysine isopeptide (Gly-Lys) (interchain with K-? in acceptor proteins) linkage.

This sequence belongs to the URM1 family. As to quaternary structure, interacts with cer. Post-translationally, C-terminal thiocarboxylation occurs in 2 steps, it is first acyl-adenylated (-COAMP) via the hesA/moeB/thiF part of the MOCS3 homolog, then thiocarboxylated (-COSH) via the rhodanese domain of the MOCS3 homolog.

It is found in the cytoplasm. It participates in tRNA modification; 5-methoxycarbonylmethyl-2-thiouridine-tRNA biosynthesis. In terms of biological role, acts as a sulfur carrier required for 2-thiolation of mcm(5)S(2)U at tRNA wobble positions of cytosolic tRNA(Lys), tRNA(Glu) and tRNA(Gln). Serves as sulfur donor in tRNA 2-thiolation reaction by being thiocarboxylated (-COSH) at its C-terminus by MOCS3. The sulfur is then transferred to tRNA to form 2-thiolation of mcm(5)S(2)U. Also acts as a ubiquitin-like protein (UBL) that is covalently conjugated via an isopeptide bond to lysine residues of target proteins such as Prx2/Jafrac1, Ciao1, Eip71CD and GILT1. The thiocarboxylated form serves as substrate for conjugation and oxidative stress specifically induces the formation of UBL-protein conjugates. The protein is Ubiquitin-related modifier 1 homolog of Drosophila simulans (Fruit fly).